A 452-amino-acid chain; its full sequence is GTPase Der (452 aa).

2 EngA-type G domains span residues 4–169 and 177–352; these read PVVA…PPQD and IQMA…EQHR. Residues 10 to 17, 57 to 61, 120 to 123, 183 to 190, 230 to 234, and 295 to 298 contribute to the GTP site; these read GRPNVGKS, DTGGL, NKCE, DTAGI, and NKWD. The region spanning 353–438 is the KH-like domain; sequence RRVTTAVVNE…PVRLFWRGKQ (86 aa).

It belongs to the TRAFAC class TrmE-Era-EngA-EngB-Septin-like GTPase superfamily. EngA (Der) GTPase family. As to quaternary structure, associates with the 50S ribosomal subunit.

In terms of biological role, GTPase that plays an essential role in the late steps of ribosome biogenesis. In Synechococcus sp. (strain RCC307), this protein is GTPase Der.